Reading from the N-terminus, the 463-residue chain is Fumarate hydratase class II (463 aa).

Substrate-binding positions include 98–100 (SGT), 129–132 (HPND), 139–141 (SSN), and T187. H188 serves as the catalytic Proton donor/acceptor. S318 is an active-site residue. Substrate-binding positions include S319 and 324–326 (KVN).

Belongs to the class-II fumarase/aspartase family. Fumarase subfamily. As to quaternary structure, homotetramer.

The protein resides in the cytoplasm. It carries out the reaction (S)-malate = fumarate + H2O. It functions in the pathway carbohydrate metabolism; tricarboxylic acid cycle; (S)-malate from fumarate: step 1/1. Functionally, involved in the TCA cycle. Catalyzes the stereospecific interconversion of fumarate to L-malate. The sequence is that of Fumarate hydratase class II from Caulobacter vibrioides (strain ATCC 19089 / CIP 103742 / CB 15) (Caulobacter crescentus).